Here is a 159-residue protein sequence, read N- to C-terminus: G-protein-signaling modulator 3 (159 aa).

The disordered stretch occupies residues 1-54; that stretch reads MEAERPQEEDGEQSLPQDDQGWPPVNATARPWRSAPPSPPPPGTRHTALGPRSG. A phosphoserine mark is found at Ser-34, Ser-38, Ser-55, and Ser-58. Residues 34–43 show a composition bias toward pro residues; it reads SAPPSPPPPG. Phosphothreonine is present on Thr-61. The GoLoco 1 domain occupies 61-83; it reads TELLLDLVAEAQSRRLEEQRATF. Residues 77–97 form a disordered region; it reads EEQRATFHTPEAPPNLAPAPP. Positions 87–97 are enriched in pro residues; the sequence is EAPPNLAPAPP. GoLoco domains lie at 103-125 and 131-154; these read KEQLYSTILSHQCQRIEAQRSDP and GQELLELLLRVQGGGRMEEQRSRP.

It localises to the cytoplasm. Functionally, interacts with subunit of G(i) alpha proteins and regulates the activation of G(i) alpha proteins. The polypeptide is G-protein-signaling modulator 3 (Gpsm3) (Mus musculus (Mouse)).